A 396-amino-acid chain; its full sequence is Elongation factor Tu (396 aa).

The region spanning 10-206 is the tr-type G domain; the sequence is KPHVNVGTIG…ALDTYIPTPE (197 aa). The tract at residues 19 to 26 is G1; sequence GHVDHGKT. 19-26 provides a ligand contact to GTP; it reads GHVDHGKT. Mg(2+) is bound at residue Thr26. A G2 region spans residues 60 to 64; that stretch reads GITIN. The G3 stretch occupies residues 81–84; the sequence is DCPG. GTP contacts are provided by residues 81 to 85 and 136 to 139; these read DCPGH and NKAD. The interval 136 to 139 is G4; that stretch reads NKAD. Residues 174–176 are G5; that stretch reads SAK.

Belongs to the TRAFAC class translation factor GTPase superfamily. Classic translation factor GTPase family. EF-Tu/EF-1A subfamily. As to quaternary structure, monomer.

The protein localises to the cytoplasm. It carries out the reaction GTP + H2O = GDP + phosphate + H(+). GTP hydrolase that promotes the GTP-dependent binding of aminoacyl-tRNA to the A-site of ribosomes during protein biosynthesis. In Janthinobacterium sp. (strain Marseille) (Minibacterium massiliensis), this protein is Elongation factor Tu.